A 313-amino-acid chain; its full sequence is Ribosomal RNA small subunit methyltransferase H (313 aa).

Residues 35–37 (GGH), Asp55, Phe81, Asp103, and Gln110 contribute to the S-adenosyl-L-methionine site.

This sequence belongs to the methyltransferase superfamily. RsmH family.

Its subcellular location is the cytoplasm. The catalysed reaction is cytidine(1402) in 16S rRNA + S-adenosyl-L-methionine = N(4)-methylcytidine(1402) in 16S rRNA + S-adenosyl-L-homocysteine + H(+). In terms of biological role, specifically methylates the N4 position of cytidine in position 1402 (C1402) of 16S rRNA. This chain is Ribosomal RNA small subunit methyltransferase H, found in Pseudomonas aeruginosa (strain ATCC 15692 / DSM 22644 / CIP 104116 / JCM 14847 / LMG 12228 / 1C / PRS 101 / PAO1).